Consider the following 189-residue polypeptide: MIFLYKIFGKWDPTEVEVRDLGIKRYVSLAPVIVPHSSGKHARQQFNKSEISIVERLANNLMRTETNTGKKQVTLRAVEEAFDIINRKTQQNPIQILVDAIANAGPREEVVRLKYGGISVPKAVDTAPQRRVDTALRYISMGTNAAAFKSKRSVAECLATELIGAANRDTKSFSINRKDAKERVAKAAR.

This sequence belongs to the universal ribosomal protein uS7 family. In terms of assembly, part of the 30S ribosomal subunit.

In terms of biological role, one of the primary rRNA binding proteins, it binds directly to 16S rRNA where it nucleates assembly of the head domain of the 30S subunit. Is located at the subunit interface close to the decoding center. The polypeptide is Small ribosomal subunit protein uS7 (Methanosarcina mazei (strain ATCC BAA-159 / DSM 3647 / Goe1 / Go1 / JCM 11833 / OCM 88) (Methanosarcina frisia)).